We begin with the raw amino-acid sequence, 328 residues long: GMP reductase (328 aa).

The active-site Thioimidate intermediate is the cysteine 176. 205-228 (IIADGGIRTHGDIAKSIRFGASMI) provides a ligand contact to NADP(+).

The protein belongs to the IMPDH/GMPR family. GuaC type 2 subfamily.

It catalyses the reaction IMP + NH4(+) + NADP(+) = GMP + NADPH + 2 H(+). In terms of biological role, catalyzes the irreversible NADPH-dependent deamination of GMP to IMP. It functions in the conversion of nucleobase, nucleoside and nucleotide derivatives of G to A nucleotides, and in maintaining the intracellular balance of A and G nucleotides. This is GMP reductase from Streptococcus pneumoniae serotype 4 (strain ATCC BAA-334 / TIGR4).